Consider the following 165-residue polypeptide: MSHPALTQLRALRYFKEIPALEPQLLDWLLLEDSMTKRFEQQGKTVSVTMIREGFVEQNEIPEELPLLPKESRYWLREILLCADGEPWLAGRTVVPVSTLSGPELALQKLGKTPLGRYLFTSSTLTRDFIEIGRDAGLWGRRSRLRLSGKPLLLTELFLPASPLY.

Substrate is bound by residues M35, R77, L115, and E156.

The protein belongs to the UbiC family. Monomer.

It is found in the cytoplasm. It carries out the reaction chorismate = 4-hydroxybenzoate + pyruvate. Its pathway is cofactor biosynthesis; ubiquinone biosynthesis. Its function is as follows. Removes the pyruvyl group from chorismate, with concomitant aromatization of the ring, to provide 4-hydroxybenzoate (4HB) for the ubiquinone pathway. The sequence is that of Chorismate pyruvate-lyase from Shigella dysenteriae serotype 1 (strain Sd197).